The following is a 204-amino-acid chain: MSSILLLTSSPRAESLSTPIAADLAEKLKNQKPGSVVVRRDLAATPLPHIDDLFTGAIRKPAEARTAEEIAAVKTSDELVAELFAADTIVISTGLINFNIYSSLKTWIDNVARAGVTFKYTESGPVGLVTGKKVYVVLASGGVYSQGPAAPLNHAVPYLKSVLGFLGITDIETIYVEGLAFGPEAAEKAIGAAKSRVEEIALAA.

FMN-binding positions include Ser-10 and 15–17; that span reads SLS.

It belongs to the azoreductase type 1 family. As to quaternary structure, homodimer. Requires FMN as cofactor.

The enzyme catalyses 2 a quinone + NADH + H(+) = 2 a 1,4-benzosemiquinone + NAD(+). It catalyses the reaction N,N-dimethyl-1,4-phenylenediamine + anthranilate + 2 NAD(+) = 2-(4-dimethylaminophenyl)diazenylbenzoate + 2 NADH + 2 H(+). Its function is as follows. Quinone reductase that provides resistance to thiol-specific stress caused by electrophilic quinones. Also exhibits azoreductase activity. Catalyzes the reductive cleavage of the azo bond in aromatic azo compounds to the corresponding amines. The protein is FMN-dependent NADH:quinone oxidoreductase 1 of Rhizobium etli (strain ATCC 51251 / DSM 11541 / JCM 21823 / NBRC 15573 / CFN 42).